The following is a 757-amino-acid chain: Dapper homolog 2 (757 aa).

The tract at residues 1-281 (MWAPSGQGPA…QSPLFALPKE (281 aa)) is inhibition of Nodal signaling. The stretch at 55–107 (RGQELRLEAALTALREQLSRLRRQDAGLKTHLDQLDQQISELQLDVSRSSCEA) forms a coiled coil. 3 disordered regions span residues 486 to 540 (RRRV…CSES), 584 to 684 (RWQS…EGCF), and 696 to 728 (AEAGQGGWAWPRVPPQQPSRAPGNTRPPLPPVP). Composition is skewed to basic and acidic residues over residues 505-516 (ERQRVTERDPSR) and 631-644 (ACARCESDPSEHSA). Positions 645 to 656 (DCTSLYHSTIAE) are enriched in polar residues. The span at 664–673 (SDHTANRFGD) shows a compositional bias: basic and acidic residues. The PDZ-binding motif lies at 754-757 (MTMV).

The protein belongs to the dapper family. As to quaternary structure, can form homodimers and heterodimers with DACT1 or DACT3. Interacts with CSNK1D, PKA catalytic subunit, PKC-type kinase, CSNK2B, DVL1, DVL2, DVL3, VANGL1, VANGL2, TGFBR1, CTNNB1, CTNND2, CTNND1, LEF1, TCF7, TCF7L1 and HDAC1. Expressed in kidney (inner medullary collecting duct). Expressed in epidermal keratinocytes and hair follicles.

In terms of biological role, involved in regulation of intracellular signaling pathways during development. Negatively regulates the Nodal signaling pathway, possibly by promoting the lysosomal degradation of Nodal receptors, such as TGFBR1. May be involved in control of the morphogenetic behavior of kidney ureteric bud cells by keeping cells epithelial and restraining their mesenchymal character. May play an inhibitory role in the re-epithelialization of skin wounds by attenuating TGF-beta signaling. In Mus musculus (Mouse), this protein is Dapper homolog 2 (Dact2).